The following is a 94-amino-acid chain: Co-chaperonin GroES (94 aa).

It belongs to the GroES chaperonin family. In terms of assembly, heptamer of 7 subunits arranged in a ring. Interacts with the chaperonin GroEL.

Its subcellular location is the cytoplasm. Its function is as follows. Together with the chaperonin GroEL, plays an essential role in assisting protein folding. The GroEL-GroES system forms a nano-cage that allows encapsulation of the non-native substrate proteins and provides a physical environment optimized to promote and accelerate protein folding. GroES binds to the apical surface of the GroEL ring, thereby capping the opening of the GroEL channel. The protein is Co-chaperonin GroES of Streptococcus pneumoniae (strain ATCC 700669 / Spain 23F-1).